Here is an 852-residue protein sequence, read N- to C-terminus: GPI ethanolamine phosphate transferase 2 (852 aa).

N191 and N420 each carry an N-linked (GlcNAc...) asparagine glycan. 3 helical membrane-spanning segments follow: residues 458 to 478, 486 to 506, and 516 to 536; these read LIRL…TFFP, FAPA…MMFA, and FWYW…AGHF. N576 is a glycosylation site (N-linked (GlcNAc...) asparagine). Transmembrane regions (helical) follow at residues 632–652, 676–696, 714–734, 750–770, 787–807, and 824–844; these read LLYH…YSLY, TLTL…FLVF, TITS…SNAI, SVFI…IWWV, AHVT…MAAC, and YLYT…LGEI.

The protein belongs to the PIGG/PIGN/PIGO family. PIGG subfamily.

The protein localises to the endoplasmic reticulum membrane. Its pathway is glycolipid biosynthesis; glycosylphosphatidylinositol-anchor biosynthesis. Its function is as follows. Ethanolamine phosphate transferase involved in glycosylphosphatidylinositol-anchor biosynthesis. Transfers ethanolamine phosphate to the GPI second mannose. In Aspergillus oryzae (strain ATCC 42149 / RIB 40) (Yellow koji mold), this protein is GPI ethanolamine phosphate transferase 2 (las21).